A 167-amino-acid chain; its full sequence is Methylated-DNA--protein-cysteine methyltransferase (167 aa).

Cysteine 128 serves as the catalytic Nucleophile; methyl group acceptor.

This sequence belongs to the MGMT family.

It localises to the cytoplasm. The enzyme catalyses a 6-O-methyl-2'-deoxyguanosine in DNA + L-cysteinyl-[protein] = S-methyl-L-cysteinyl-[protein] + a 2'-deoxyguanosine in DNA. It catalyses the reaction a 4-O-methyl-thymidine in DNA + L-cysteinyl-[protein] = a thymidine in DNA + S-methyl-L-cysteinyl-[protein]. Functionally, involved in the cellular defense against the biological effects of O6-methylguanine (O6-MeG) and O4-methylthymine (O4-MeT) in DNA. Repairs the methylated nucleobase in DNA by stoichiometrically transferring the methyl group to a cysteine residue in the enzyme. This is a suicide reaction: the enzyme is irreversibly inactivated. This is Methylated-DNA--protein-cysteine methyltransferase from Methanocaldococcus jannaschii (strain ATCC 43067 / DSM 2661 / JAL-1 / JCM 10045 / NBRC 100440) (Methanococcus jannaschii).